Here is a 193-residue protein sequence, read N- to C-terminus: 3-isopropylmalate dehydratase small subunit (193 aa).

Belongs to the LeuD family. LeuD type 1 subfamily. As to quaternary structure, heterodimer of LeuC and LeuD.

The enzyme catalyses (2R,3S)-3-isopropylmalate = (2S)-2-isopropylmalate. Its pathway is amino-acid biosynthesis; L-leucine biosynthesis; L-leucine from 3-methyl-2-oxobutanoate: step 2/4. Catalyzes the isomerization between 2-isopropylmalate and 3-isopropylmalate, via the formation of 2-isopropylmaleate. This chain is 3-isopropylmalate dehydratase small subunit, found in Bacillus anthracis (strain CDC 684 / NRRL 3495).